The chain runs to 1415 residues: Zygote defective protein 9 (1415 aa).

TOG stretches follow at residues 1 to 250 (MSNW…AKNA) and 251 to 530 (PPVA…AGPA). Residues 21–48 (DELRESKKWQERKEALEALLKVLTDNER) are a coiled coil. 4 HEAT repeats span residues 30–68 (QERKEALEALLKVLTDNERLSTKASYAELIGHLQMVLAK), 95–132 (SFAGPLLPVIFEKMKEKKPMLREPLVDCSNEVGRTMQS), 135–172 (TGQEDILAALAKPNPQIKQQTALFVARQLDLVVPAKQP), and 179–217 (VVPVFGKLTGDADQDVREASLQGLGAVQRIIGDKNVKNL). A disordered region spans residues 243 to 278 (AEEQAKNAPPVAPTSSTPSASAASGDPSGGTATAVV). The segment covering 255 to 276 (PTSSTPSASAASGDPSGGTATA) has biased composition (low complexity). HEAT repeat units lie at residues 339–377 (ANYGALVERLQKVLEKDANINVAALAANCITGIANGLRT), 381–418 (PFAVSVTPIIFEKFKEKKPTLRDPLVACIDAVVATTNL), 420–457 (AVGEIVLAALGKPNPSIKTQTDLFLQRCFMKLNSQTMP), and 464–502 (LIPSLIKHSGDSDSEVREASYAAMGAMMRAIGEKPSLQL). A disordered region spans residues 544 to 603 (APPAAAPPKKTAPPKKQPEDEEVVEEEDEPLKPPPGDKKKKVPVKENEENEPPVVAPKAE). The segment covering 562–572 (EDEEVVEEEDE) has biased composition (acidic residues). The interval 602–867 (AELLLSDNED…VEERIKRTGV (266 aa)) is TOG 3. HEAT repeat units follow at residues 706-743 (IKVLELCKVIVELIRDTETPMSQEEVSAFVPYLLLKTG), 764-801 (VGPLKMTPMLLDALKSKNARQRSECLLVIEYYITNAGI), and 804-841 (LKSLSVEKTVAPFVGDKDVNVRNAAINVLVACFKFEGD). A disordered region spans residues 867–914 (VKPGSGVVTSPPTGGPKILVPQQQGSVVRRPASRSRTREPEPEEVQSD).

The protein belongs to the TOG/XMAP215 family. As to quaternary structure, interacts with tac-1 to form a heterodimer.

The protein resides in the cytoplasm. The protein localises to the cytoskeleton. It localises to the spindle pole. Its subcellular location is the microtubule organizing center. It is found in the centrosome. Plays a major role in organizing microtubules and spindle poles during mitosis and meiosis in one-cell stage embryos. Required for default nucleus positioning in oocytes. The protein is Zygote defective protein 9 of Caenorhabditis elegans.